A 375-amino-acid chain; its full sequence is Growth/differentiation factor 8 (375 aa).

The N-terminal stretch at 1–18 is a signal peptide; it reads MQKLQIFVYIYLFVLIVA. A propeptide spanning residues 19–266 is cleaved from the precursor; that stretch reads GPVDLNENSE…VTDTPKRSRR (248 aa). Asn48 and Asn71 each carry an N-linked (GlcNAc...) asparagine glycan. 4 disulfide bridges follow: Cys272/Cys282, Cys281/Cys340, Cys309/Cys372, and Cys313/Cys374.

Belongs to the TGF-beta family. In terms of assembly, homodimer; disulfide-linked. Interacts with WFIKKN2, leading to inhibit its activity. Interacts with FSTL3. In terms of processing, synthesized as large precursor molecule that undergoes proteolytic cleavage to generate an N-terminal propeptide and a disulfide linked C-terminal dimer, which is the biologically active molecule. The circulating form consists of a latent complex of the C-terminal dimer and other proteins, including its propeptide, which maintain the C-terminal dimer in a latent, inactive state. Ligand activation requires additional cleavage of the prodomain by a tolloid-like metalloproteinase.

Its subcellular location is the secreted. Its function is as follows. Acts specifically as a negative regulator of skeletal muscle growth. The protein is Growth/differentiation factor 8 (MSTN) of Aepyceros melampus (Impala).